The following is a 95-amino-acid chain: Large ribosomal subunit protein uL23 (95 aa).

Belongs to the universal ribosomal protein uL23 family. Part of the 50S ribosomal subunit. Contacts protein L29, and trigger factor when it is bound to the ribosome.

Functionally, one of the early assembly proteins it binds 23S rRNA. One of the proteins that surrounds the polypeptide exit tunnel on the outside of the ribosome. Forms the main docking site for trigger factor binding to the ribosome. The polypeptide is Large ribosomal subunit protein uL23 (Desulforamulus reducens (strain ATCC BAA-1160 / DSM 100696 / MI-1) (Desulfotomaculum reducens)).